The chain runs to 105 residues: DRDAQTLTDERSDQGDGNFRYEFETSNGIYTQKTGTPGSEGQSNHQGSFRFTLEDGTIAEVTYIADEYGYQPSSDLLPVPPPAPPHVQRLLEIAAEQRAQGITFD.

The disordered stretch occupies residues 1–21; sequence DRDAQTLTDERSDQGDGNFRY. Residues 16 to 81 enclose the Chitin-binding type R&amp;R domain; the sequence is DGNFRYEFET…PSSDLLPVPP (66 aa).

Arthrodial membrane.

The chain is Cuticle protein AMP1B from Homarus americanus (American lobster).